The primary structure comprises 563 residues: Anaerobic glycerol-3-phosphate dehydrogenase subunit A (563 aa).

An FAD-binding site is contributed by Asp-20–Glu-48.

Belongs to the FAD-dependent glycerol-3-phosphate dehydrogenase family. Composed of a catalytic GlpA/B dimer and of membrane bound GlpC. It depends on FAD as a cofactor. FMN serves as cofactor.

The protein localises to the cell inner membrane. The enzyme catalyses a quinone + sn-glycerol 3-phosphate = dihydroxyacetone phosphate + a quinol. It participates in polyol metabolism; glycerol degradation via glycerol kinase pathway; glycerone phosphate from sn-glycerol 3-phosphate (anaerobic route): step 1/1. In Haemophilus influenzae (strain ATCC 51907 / DSM 11121 / KW20 / Rd), this protein is Anaerobic glycerol-3-phosphate dehydrogenase subunit A (glpA).